Consider the following 296-residue polypeptide: MQDRFIRSITQLPTPLADALIPLLHQNFAGHIDAQQLAELVQSSQMTEAEVLLALLPIAAALAKPPISEFYVGAIAKGKSGDIYMGANLELPGEALFHSVHAEQSAISHAWLSGESQIVDMIVNASPCGHCRQFMNELVEGGQIKIHLPSQDSHLLSYYLPYAFGPKDLNVQSPLLVKHETEFALDSSDPMVIEALDHAGLSYAPYTQSYAAVVLETADGATYCGRYAENAAFNPSMLPMQMALSNLTRHNRDFGEIRRAVLVESSQGKISLVGATMDALHPVAAIELEHIVVDPV.

2 consecutive CMP/dCMP-type deaminase domains span residues 47–167 (TEAE…FGPK) and 186–296 (DSSD…VDPV). Residue 88 to 90 (NLE) participates in substrate binding. Histidine 101 provides a ligand contact to Zn(2+). The active-site Proton donor is glutamate 103. Cysteine 128 and cysteine 131 together coordinate Zn(2+).

Belongs to the cytidine and deoxycytidylate deaminase family. As to quaternary structure, homodimer. Zn(2+) is required as a cofactor.

The enzyme catalyses cytidine + H2O + H(+) = uridine + NH4(+). It carries out the reaction 2'-deoxycytidine + H2O + H(+) = 2'-deoxyuridine + NH4(+). In terms of biological role, this enzyme scavenges exogenous and endogenous cytidine and 2'-deoxycytidine for UMP synthesis. The polypeptide is Cytidine deaminase (Shewanella sp. (strain MR-7)).